A 332-amino-acid polypeptide reads, in one-letter code: Phosphate acyltransferase (332 aa).

The protein belongs to the PlsX family. In terms of assembly, homodimer. Probably interacts with PlsY.

It is found in the cytoplasm. The catalysed reaction is a fatty acyl-[ACP] + phosphate = an acyl phosphate + holo-[ACP]. It participates in lipid metabolism; phospholipid metabolism. Catalyzes the reversible formation of acyl-phosphate (acyl-PO(4)) from acyl-[acyl-carrier-protein] (acyl-ACP). This enzyme utilizes acyl-ACP as fatty acyl donor, but not acyl-CoA. This Fusobacterium nucleatum subsp. nucleatum (strain ATCC 25586 / DSM 15643 / BCRC 10681 / CIP 101130 / JCM 8532 / KCTC 2640 / LMG 13131 / VPI 4355) protein is Phosphate acyltransferase.